The chain runs to 632 residues: tRNA uridine 5-carboxymethylaminomethyl modification enzyme MnmG (632 aa).

FAD contacts are provided by residues 13–18, V125, and S180; that span reads GGGHAG. 273 to 287 lines the NAD(+) pocket; that stretch reads GPRYCPSIEDKVVRF. Q370 is a binding site for FAD.

The protein belongs to the MnmG family. Homodimer. Heterotetramer of two MnmE and two MnmG subunits. FAD is required as a cofactor.

The protein localises to the cytoplasm. Its function is as follows. NAD-binding protein involved in the addition of a carboxymethylaminomethyl (cmnm) group at the wobble position (U34) of certain tRNAs, forming tRNA-cmnm(5)s(2)U34. This Nitrosospira multiformis (strain ATCC 25196 / NCIMB 11849 / C 71) protein is tRNA uridine 5-carboxymethylaminomethyl modification enzyme MnmG.